We begin with the raw amino-acid sequence, 549 residues long: Glucose-6-phosphate isomerase (549 aa).

The active-site Proton donor is the Glu-355. Residues His-387 and Lys-515 contribute to the active site.

It belongs to the GPI family.

The protein resides in the cytoplasm. The enzyme catalyses alpha-D-glucose 6-phosphate = beta-D-fructose 6-phosphate. It functions in the pathway carbohydrate biosynthesis; gluconeogenesis. It participates in carbohydrate degradation; glycolysis; D-glyceraldehyde 3-phosphate and glycerone phosphate from D-glucose: step 2/4. Its function is as follows. Catalyzes the reversible isomerization of glucose-6-phosphate to fructose-6-phosphate. This Pasteurella multocida (strain Pm70) protein is Glucose-6-phosphate isomerase.